The primary structure comprises 653 residues: Beta-galactosidase (653 aa).

An N-terminal signal peptide occupies residues 1 to 22; sequence MPGVVRLLALLLVPLLLGSARG. A propeptide spanning residues 23–27 is cleaved from the precursor; it reads LHNAT. A glycan (N-linked (GlcNAc...) asparagine) is linked at Asn-25. Tyr-82 is a substrate binding site. Asn-96 is a glycosylation site (N-linked (GlcNAc...) asparagine). Substrate-binding residues include Glu-128 and Asn-186. Residue Glu-187 is the Proton donor of the active site. Cysteines 194 and 229 form a disulfide. Asn-246 carries N-linked (GlcNAc...) asparagine glycosylation. Glu-267 acts as the Nucleophile in catalysis. Residue Tyr-332 participates in substrate binding. Asn-463, Asn-497, and Asn-554 each carry an N-linked (GlcNAc...) asparagine glycan. Residues Cys-625 and Cys-633 are joined by a disulfide bond.

The protein belongs to the glycosyl hydrolase 35 family. Homodimer. May form higher multimers.

The protein localises to the lysosome. It catalyses the reaction Hydrolysis of terminal non-reducing beta-D-galactose residues in beta-D-galactosides.. In terms of biological role, cleaves beta-linked terminal galactosyl residues from gangliosides, glycoproteins, and glycosaminoglycans. The protein is Beta-galactosidase (GLB1) of Bos taurus (Bovine).